A 214-amino-acid chain; its full sequence is Adenylate kinase (214 aa).

Gly-10–Thr-15 is an ATP binding site. Positions Ser-30–Val-59 are NMP. AMP contacts are provided by residues Thr-31, Arg-36, Lys-57–Val-59, Gly-85–Arg-88, and Gln-92. The LID stretch occupies residues Gly-122–Asp-159. ATP is bound by residues Arg-123 and Val-132–Tyr-133. Arg-156 and Arg-167 together coordinate AMP. Residue Arg-200 participates in ATP binding.

The protein belongs to the adenylate kinase family. In terms of assembly, monomer.

It is found in the cytoplasm. It catalyses the reaction AMP + ATP = 2 ADP. Its pathway is purine metabolism; AMP biosynthesis via salvage pathway; AMP from ADP: step 1/1. In terms of biological role, catalyzes the reversible transfer of the terminal phosphate group between ATP and AMP. Plays an important role in cellular energy homeostasis and in adenine nucleotide metabolism. The protein is Adenylate kinase of Yersinia enterocolitica serotype O:8 / biotype 1B (strain NCTC 13174 / 8081).